Here is a 604-residue protein sequence, read N- to C-terminus: Replication protein E1 (604 aa).

The Nuclear localization signal motif lies at Lys-79–Lys-81. Residues Ser-84 and Ser-92 each carry the phosphoserine; by host modification. The interval Glu-144 to Thr-307 is DNA-binding region. The SF3 helicase domain maps to Leu-406–Leu-556. Gly-432–Ser-439 is an ATP binding site. A Glycyl lysine isopeptide (Lys-Gly) (interchain with G-Cter in SUMO) cross-link involves residue Lys-513.

Belongs to the papillomaviridae E1 protein family. As to quaternary structure, can form hexamers. Interacts with E2 protein; this interaction increases E1 DNA binding specificity. Interacts with host DNA polymerase subunit POLA2. Interacts with host single stranded DNA-binding protein RPA1. Interacts with host TOP1; this interaction stimulates the enzymatic activity of TOP1. In terms of processing, phosphorylated. Post-translationally, sumoylated.

It localises to the host nucleus. It catalyses the reaction Couples ATP hydrolysis with the unwinding of duplex DNA by translocating in the 3'-5' direction.. The catalysed reaction is ATP + H2O = ADP + phosphate + H(+). In terms of biological role, ATP-dependent DNA 3'-5' helicase required for initiation of viral DNA replication. It forms a complex with the viral E2 protein. The E1-E2 complex binds to the replication origin which contains binding sites for both proteins. During the initial step, a dimer of E1 interacts with a dimer of protein E2 leading to a complex that binds the viral origin of replication with high specificity. Then, a second dimer of E1 displaces the E2 dimer in an ATP-dependent manner to form the E1 tetramer. Following this, two E1 monomers are added to each half of the site, which results in the formation of two E1 trimers on the viral ori. Subsequently, two hexamers will be created. The double hexamer acts as a bi-directional helicase machinery and unwinds the viral DNA and then recruits the host DNA polymerase to start replication. This chain is Replication protein E1, found in Homo sapiens (Human).